Reading from the N-terminus, the 334-residue chain is Glycerol-3-phosphate dehydrogenase [NAD(P)+] (334 aa).

Residues W13, R33, and K106 each coordinate NADPH. The sn-glycerol 3-phosphate site is built by K106, G137, and S139. A141 contacts NADPH. K192, D245, S255, R256, and N257 together coordinate sn-glycerol 3-phosphate. Residue K192 is the Proton acceptor of the active site. R256 is a binding site for NADPH. NADPH contacts are provided by V280 and E282.

It belongs to the NAD-dependent glycerol-3-phosphate dehydrogenase family.

The protein localises to the cytoplasm. The catalysed reaction is sn-glycerol 3-phosphate + NAD(+) = dihydroxyacetone phosphate + NADH + H(+). It carries out the reaction sn-glycerol 3-phosphate + NADP(+) = dihydroxyacetone phosphate + NADPH + H(+). The protein operates within membrane lipid metabolism; glycerophospholipid metabolism. Functionally, catalyzes the reduction of the glycolytic intermediate dihydroxyacetone phosphate (DHAP) to sn-glycerol 3-phosphate (G3P), the key precursor for phospholipid synthesis. The protein is Glycerol-3-phosphate dehydrogenase [NAD(P)+] of Chlamydia trachomatis serovar A (strain ATCC VR-571B / DSM 19440 / HAR-13).